We begin with the raw amino-acid sequence, 568 residues long: Urease subunit alpha (568 aa).

One can recognise a Urease domain in the interval 131 to 568 (GGIDTHIHFI…LPMAQRYFLF (438 aa)). Ni(2+) contacts are provided by H136, H138, and K219. N6-carboxylysine is present on K219. H221 provides a ligand contact to substrate. 2 residues coordinate Ni(2+): H248 and H274. H322 functions as the Proton donor in the catalytic mechanism. Residue D362 coordinates Ni(2+).

It belongs to the metallo-dependent hydrolases superfamily. Urease alpha subunit family. Heterotrimer of UreA (gamma), UreB (beta) and UreC (alpha) subunits. Three heterotrimers associate to form the active enzyme. Ni cation is required as a cofactor. Post-translationally, carboxylation allows a single lysine to coordinate two nickel ions.

The protein localises to the cytoplasm. The enzyme catalyses urea + 2 H2O + H(+) = hydrogencarbonate + 2 NH4(+). The protein operates within nitrogen metabolism; urea degradation; CO(2) and NH(3) from urea (urease route): step 1/1. This is Urease subunit alpha from Trichormus variabilis (strain ATCC 29413 / PCC 7937) (Anabaena variabilis).